We begin with the raw amino-acid sequence, 556 residues long: Acetyl-coenzyme A thioesterase (556 aa).

The HotDog ACOT-type 1 domain occupies 6 to 118 (APGEVLMSQA…FSTFVVKPLG (113 aa)). N6-succinyllysine is present on Lys34. CoA contacts are provided by residues 54 to 56 (TAS) and 83 to 85 (STS). At Lys97 the chain carries N6-succinyllysine. Arg145 is a binding site for CoA. An N6-succinyllysine mark is found at Lys160 and Lys229. Residues 180–295 (MATSVQSIEL…FLIYNAVDDQ (116 aa)) form the HotDog ACOT-type 2 domain. 235 to 237 (KFR) serves as a coordination point for CoA. The START domain maps to 341 to 550 (GTQWDISKKG…IKFIENATHD (210 aa)).

In terms of assembly, homodimer or homotetramer.

Its subcellular location is the cytoplasm. The protein localises to the cytosol. The catalysed reaction is acetyl-CoA + H2O = acetate + CoA + H(+). It carries out the reaction butanoyl-CoA + H2O = butanoate + CoA + H(+). The enzyme catalyses hexanoyl-CoA + H2O = hexanoate + CoA + H(+). Its pathway is lipid metabolism; fatty acid metabolism. With respect to regulation, allosterically regulated by ATP (activator) and ADP (inhibitor). Cold labile, it dissociates into inactive monomers at low temperature. Its function is as follows. Catalyzes the hydrolysis of acyl-CoAs into free fatty acids and coenzyme A (CoASH), regulating their respective intracellular levels. Preferentially hydrolyzes acetyl-CoA. The chain is Acetyl-coenzyme A thioesterase (Acot12) from Rattus norvegicus (Rat).